The sequence spans 251 residues: MTSSTSPETPSDPSQTRYKRVMLKISGEALMGDQGFGLHPPTVKRIAHEIKTVHDMGVEICMVIGGGNIFRGLSGAAQGMERTTADYMGMLATVMNALGMQAALEGLGVFTRVISAIRMDEVAEPYIRRRAVRHLEKKRVCIFAAGTGNPYFTTDTAATLRANEMACEAIFMGKNGVDGVYDKDPALHDDAVRYDEISYDEVLAKRLKVMDASAIALARDNNLPLIVFSLDTAGGFRGILAGEGTYTKVQG.

24–27 is a binding site for ATP; sequence KISG. The segment at 32-37 is involved in allosteric activation by GTP; sequence GDQGFG. UMP is bound at residue Gly-66. ATP-binding residues include Gly-67 and Arg-71. Residues Asp-86 and 147 to 154 contribute to the UMP site; that span reads TGNPYFTT. 3 residues coordinate ATP: Asn-175, Tyr-181, and Asp-184.

This sequence belongs to the UMP kinase family. As to quaternary structure, homohexamer.

The protein localises to the cytoplasm. It catalyses the reaction UMP + ATP = UDP + ADP. It participates in pyrimidine metabolism; CTP biosynthesis via de novo pathway; UDP from UMP (UMPK route): step 1/1. Its activity is regulated as follows. Allosterically activated by GTP. Inhibited by UTP. Its function is as follows. Catalyzes the reversible phosphorylation of UMP to UDP. The polypeptide is Uridylate kinase (Ruegeria pomeroyi (strain ATCC 700808 / DSM 15171 / DSS-3) (Silicibacter pomeroyi)).